Here is a 138-residue protein sequence, read N- to C-terminus: Putative pre-16S rRNA nuclease (138 aa).

It belongs to the YqgF nuclease family.

The protein localises to the cytoplasm. Its function is as follows. Could be a nuclease involved in processing of the 5'-end of pre-16S rRNA. The sequence is that of Putative pre-16S rRNA nuclease from Polaromonas sp. (strain JS666 / ATCC BAA-500).